The sequence spans 274 residues: Factor H binding protein (274 aa).

An N-terminal signal peptide occupies residues 1-19; the sequence is MNRTAFCCLSLTTALILTA. A lipid anchor (N-palmitoyl cysteine) is attached at C20. C20 carries S-diacylglycerol cysteine lipidation. The interval 27–119 is domain A; the sequence is VAADIGAGLA…LESGEFQVYK (93 aa). The tract at residues 120-183 is domain B; sequence QSHSALTAFQ…TAFGSDDAGG (64 aa). The domain C stretch occupies residues 184 to 274; it reads KLTYTIDFAA…IRHIGLAAKQ (91 aa).

It belongs to the factor H binding-protein family. Binds to host factor H (fH from human). Both fHbp beta-barrels contact Sushi domains 6 and 7 in fH (also called complement control protein domains, CCP). This interaction probably mimics the normal (carbohydrate-dependent) mode of fH recruitement, regulating fH activity. Sucrose octasulphate inhibits the fHbp-fH interaction. Post-translationally, protein is lipidated in N.meningitidis upon growth in radioactive palmitic acid, probably on Cys-20.

It localises to the cell outer membrane. It is found in the secreted. The protein localises to the extracellular vesicle. Its subcellular location is the bacterial extracellular vesicle. Its function is as follows. A bacterial surface lipoprotein that binds host (human) complement factor H (fH, gene CFH), binding contributes to the avoidance of complement-mediated lysis by N.meningitidis. Binding of fH to the bacteria surface is independent of bacterial sialic acid moieties. fH binding affinity is high enough that it may sequester plasma fH, depleting its circulating levels and de-regulating complement in the host. This protein induces high levels of bactericidal antibodies in mice. This chain is Factor H binding protein (fhbP), found in Neisseria meningitidis serogroup B (strain ATCC BAA-335 / MC58).